The following is a 152-amino-acid chain: Superoxide dismutase [Cu-Zn] 2 (152 aa).

N-linked (GlcNAc...) asparagine glycans are attached at residues Asn-9 and Asn-33. The Cu cation site is built by His-45, His-47, and His-62. Cys-56 and Cys-145 are joined by a disulfide. Zn(2+)-binding residues include His-62, His-70, His-79, and Asp-82. Asn-85 carries N-linked (GlcNAc...) asparagine glycosylation. Residue His-119 participates in Cu cation binding.

Belongs to the Cu-Zn superoxide dismutase family. It depends on Cu cation as a cofactor. Zn(2+) serves as cofactor. In terms of tissue distribution, expressed in fruits, leaves and pollen grains.

Its subcellular location is the cytoplasm. It is found in the endoplasmic reticulum. It carries out the reaction 2 superoxide + 2 H(+) = H2O2 + O2. Inhibited by KCN and H(2)O(2). Functionally, destroys radicals which are normally produced within the cells and which are toxic to biological systems. Probably involved in the protection against oxidative stress during pollen development. The chain is Superoxide dismutase [Cu-Zn] 2 (OLE5) from Olea europaea (Common olive).